Reading from the N-terminus, the 510-residue chain is MQVKIVQVFPCLVLLVKLVLLSVLLPSATGSYHCSNNATQNSYLWRIEASPPIYLFGTMHVPYKKLWDDVPDNVKSVLSLSEHLCVELRLTDSETSKNLSACRYLPKNETLESVLPGGLYVRVLKYFVRIQNQFPKWLFGNASINGLSRIESDRLFHAMIGNWNRLRPVWLLMLISSLSRENVQERSIPLLDVFLDRAAEGMGKNVEAVEVYKEQCRPFNRLNNTKVFVALRKLLDYLEPLADGPISSTDSDLETYNCGDFKSLVSARPILPLPSSSKLPNLTSEEAGDLESINEFLVSQIVYRRNRRMSKTIMSLLSRQRNETYLFAIGAGHFVGERNVVHMLKKKGYSVNRLSVTETIPGPPLPKNIISLGDPSSQLTILNISSTIPTLPPNRPSHVPPTLSPETIARIIQSVFNNTQSIYTVDSVEVTPTTTSLNSATASTTVATPTSSVTPPTSSSSQTRSLTISDSQRTSDDSAFIPSASSGLRYNIGLVCVTLFFVLLIITSAL.

The signal sequence occupies residues 1–30; sequence MQVKIVQVFPCLVLLVKLVLLSVLLPSATG. The Extracellular portion of the chain corresponds to 31–489; that stretch reads SYHCSNNATQ…FIPSASSGLR (459 aa). 9 N-linked (GlcNAc...) asparagine glycosylation sites follow: N37, N98, N108, N141, N223, N281, N322, N383, and N417. Residues 435 to 471 are compositionally biased toward low complexity; it reads TSLNSATASTTVATPTSSVTPPTSSSSQTRSLTISDS. Positions 435-477 are disordered; that stretch reads TSLNSATASTTVATPTSSVTPPTSSSSQTRSLTISDSQRTSDD. The helical transmembrane segment at 490–510 threads the bilayer; it reads YNIGLVCVTLFFVLLIITSAL.

The protein belongs to the TIKI family. It depends on Mn(2+) as a cofactor. Co(2+) is required as a cofactor.

Its subcellular location is the membrane. Functionally, metalloprotease. The chain is Metalloprotease TIKI homolog from Amphimedon queenslandica (Sponge).